The primary structure comprises 159 residues: Large ribosomal subunit protein uL15 (159 aa).

Residues 1–18 (MKLNEIRDNEGSSKDRIR) show a composition bias toward basic and acidic residues. Residues 1-37 (MKLNEIRDNEGSSKDRIRVGRGIGSGKGKTGGRGVKG) are disordered. Over residues 21-35 (RGIGSGKGKTGGRGV) the composition is skewed to gly residues.

It belongs to the universal ribosomal protein uL15 family. In terms of assembly, part of the 50S ribosomal subunit.

Functionally, binds to the 23S rRNA. The polypeptide is Large ribosomal subunit protein uL15 (Agrobacterium fabrum (strain C58 / ATCC 33970) (Agrobacterium tumefaciens (strain C58))).